The sequence spans 585 residues: Glutamate decarboxylase 2 (585 aa).

Residues 1-25 (MASPGSGFWSFGSEDGSGDPENPGT) are disordered. 5 positions are modified to phosphoserine: Ser-3, Ser-6, Ser-10, Ser-13, and Ser-17. Residues Cys-30 and Cys-45 are each lipidated (S-palmitoyl cysteine). A substrate-binding site is contributed by 181 to 183 (QLS). At Lys-396 the chain carries N6-(pyridoxal phosphate)lysine. Arg-558 serves as a coordination point for substrate.

Belongs to the group II decarboxylase family. In terms of assembly, homodimer. Requires pyridoxal 5'-phosphate as cofactor. Post-translationally, the N-terminus is blocked. In terms of processing, phosphorylated; which does not affect kinetic parameters or subcellular location. Palmitoylated; which is required for presynaptic clustering.

The protein resides in the cytoplasm. The protein localises to the cytosol. It is found in the cytoplasmic vesicle. Its subcellular location is the presynaptic cell membrane. It localises to the golgi apparatus membrane. The catalysed reaction is L-glutamate + H(+) = 4-aminobutanoate + CO2. Its function is as follows. Catalyzes the production of GABA. This chain is Glutamate decarboxylase 2 (Gad2), found in Rattus norvegicus (Rat).